The sequence spans 249 residues: MGGSTSKNSFKNTTNIISHSIFNQMQNCISMLDGTNYIGVFGDGNIINHVFQDLNLSLDTSCVQKHVNEENFITNLSNQITQNLKDQEVALTQWMDAGHHDQKTDIEENIKVNLKTTLIQNCVSALSGMNVLVVKGNGNIVENATQKQSQQIISNCLQGSKQAIDTTTGITNTVNQYSHYTSKNFFEFIADAISAVFKNIMVAAVVIVVIIVGFIAVFYFLHSRHRHEEEEEAEPLITSKILKNAAVSQ.

Gly-2 carries the N-myristoyl glycine; by host lipid modification. At 2–199 the chain is on the cytoplasmic side; the sequence is GGSTSKNSFK…ADAISAVFKN (198 aa). A helical membrane pass occupies residues 200–220; sequence IMVAAVVIVVIIVGFIAVFYF. Residues 221 to 249 lie on the Extracellular side of the membrane; sequence LHSRHRHEEEEEAEPLITSKILKNAAVSQ.

Belongs to the asfivirus E248R family. In terms of assembly, interacts with A151R.

It localises to the host membrane. Its subcellular location is the virion membrane. Functionally, essential for viral fusion with host endosomal membrane and core release. This African swine fever virus (isolate Pig/Kenya/KEN-50/1950) (ASFV) protein is Inner membrane protein pE248R.